We begin with the raw amino-acid sequence, 263 residues long: MLKINNDTKLFGVLGENIPYTLSPAIHNYAFQRLGINAVYLRFDVRRDKFHSIIIGLLNIASGLNVTIPYKEDVVKYLYGVSEEARVIGAVNTIHNLNGYNTDYIAIYNLIKEKLIDKPSICTVFGAGGAGRASIYALLKLGCEVYVINRSLERAQSLEKDFKEFGYDIKIISSCKPGDIIVNATPNSSYVPDECIKGKLVVDLVYNPVKTPLILKAEKTGIRSINGLEILVRQAMEAERIWFGKSLSDEEVVKFLYARKLVR.

Shikimate contacts are provided by residues 21–23 (TLS) and T67. K71 functions as the Proton acceptor in the catalytic mechanism. E83 contributes to the NADP(+) binding site. Positions 92 and 103 each coordinate shikimate. NADP(+)-binding positions include 126–130 (GAGGA) and L204. Position 206 (Y206) interacts with shikimate. Position 227 (G227) interacts with NADP(+).

The protein belongs to the shikimate dehydrogenase family. As to quaternary structure, homodimer.

It catalyses the reaction shikimate + NADP(+) = 3-dehydroshikimate + NADPH + H(+). Its pathway is metabolic intermediate biosynthesis; chorismate biosynthesis; chorismate from D-erythrose 4-phosphate and phosphoenolpyruvate: step 4/7. Involved in the biosynthesis of the chorismate, which leads to the biosynthesis of aromatic amino acids. Catalyzes the reversible NADPH linked reduction of 3-dehydroshikimate (DHSA) to yield shikimate (SA). The sequence is that of Shikimate dehydrogenase (NADP(+)) from Sulfolobus acidocaldarius (strain ATCC 33909 / DSM 639 / JCM 8929 / NBRC 15157 / NCIMB 11770).